We begin with the raw amino-acid sequence, 45 residues long: Mu-conotoxin-like Cal 12.1.2e (45 aa).

Intrachain disulfides connect C3–C16, C11–C28, C18–C33, and C27–C39. W17 is subject to 6'-bromotryptophan. A 4-hydroxyproline modification is found at P23. W38 bears the 6'-bromotryptophan mark. Residue P40 is modified to 4-hydroxyproline.

In terms of tissue distribution, expressed by the venom duct.

It localises to the secreted. Its function is as follows. Mu-conotoxins block voltage-gated sodium channels. This toxin reversibly blocks voltage-gated sodium channel in cephalopods, with no alteration in the voltage dependence of sodium conductance or on the kinetics of inactivation. The chain is Mu-conotoxin-like Cal 12.1.2e from Californiconus californicus (California cone).